Consider the following 181-residue polypeptide: Macro domain-containing protein in sno 5'region (181 aa).

Residues 1–172 (MTTITLVQGD…TFARELGDAG (172 aa)) form the Macro domain.

This sequence belongs to the MacroD-type family.

In Streptomyces nogalater, this protein is Macro domain-containing protein in sno 5'region.